Consider the following 659-residue polypeptide: Exoribonuclease 2 (659 aa).

Residues 189-531 (RENLTALHFV…NHRLIKAVLA (343 aa)) form the RNB domain. Positions 576–658 (NAEFEAEVQD…ATRSIVGEIL (83 aa)) constitute an S1 motif domain.

This sequence belongs to the RNR ribonuclease family. RNase II subfamily.

It is found in the cytoplasm. It catalyses the reaction Exonucleolytic cleavage in the 3'- to 5'-direction to yield nucleoside 5'-phosphates.. Involved in mRNA degradation. Hydrolyzes single-stranded polyribonucleotides processively in the 3' to 5' direction. The sequence is that of Exoribonuclease 2 from Haemophilus influenzae (strain PittGG).